A 593-amino-acid polypeptide reads, in one-letter code: Meiotic recombination protein REC8 homolog (593 aa).

Ser-149 carries the post-translational modification Phosphoserine. Phosphothreonine is present on Thr-164. Position 192 is a phosphoserine (Ser-192). Disordered regions lie at residues Gln-247 to Glu-282, Glu-317 to Arg-344, and Pro-422 to Thr-444. Residues Asp-255–Glu-265 are compositionally biased toward basic and acidic residues. A compositionally biased stretch (basic and acidic residues) spans Glu-432–Thr-444.

Belongs to the rad21 family. Interacts (phosphorylated and unphosphorylated form) with SMC3. Interacts with SYCP3. Interacts (phosphorylated and unphosphorylated form) with SMC1B. Does not interact with SMC1A. Interacts with RAD51. Forms a complex with EWSR1, PRDM9, SYCP3 and SYCP1; complex formation is dependent of phosphorylated form of REC8 and requires PRDM9 bound to hotspot DNA; EWSR1 joins PRDM9 with the chromosomal axis through REC8. In terms of processing, phosphorylated.

Its subcellular location is the nucleus. It is found in the chromosome. It localises to the centromere. Functionally, required during meiosis for separation of sister chromatids and homologous chromosomes. Proteolytic cleavage of REC8 on chromosome arms by separin during anaphase I allows for homologous chromosome separation in meiosis I and cleavage of REC8 on centromeres during anaphase II allows for sister chromatid separation in meiosis II. This chain is Meiotic recombination protein REC8 homolog, found in Rattus norvegicus (Rat).